The sequence spans 738 residues: Coiled-coil domain-containing protein 142 (738 aa).

The tract at residues 1-34 (MARASSSSGPLPPLANVPSSWAQPVGAGEERDEG) is disordered. Residues 69–92 (ALQRLRATLLRLHREREQLLRARD) are a coiled coil. Residues 682–704 (LSTLGGGGRGGGGGGGPGPSPEA) form a disordered region. Positions 685 to 698 (LGGGGRGGGGGGGP) are enriched in gly residues.

The sequence is that of Coiled-coil domain-containing protein 142 (Ccdc142) from Mus musculus (Mouse).